Consider the following 109-residue polypeptide: N-cym protein (109 aa).

In terms of assembly, interacts with MYCN and GSK3B. As to expression, expressed in the neuronal cells of the cerebrum and cerebellum, spermatocytes of the testis, pancreatic cells and also the heart. Expressed in both primary and metastatic neuroblastomas and in thyroid tumors (at protein level). Expression is associated with poor prognosis in neuroblastoma. Expressed in the fetal brain, lung, liver and kidney at varying low levels.

It is found in the cytoplasm. The protein resides in the nucleus. In terms of biological role, regulates stability of MYCN in neuroblastoma cells by inhibiting GSK3B-mediated MYCN phosphorylation. Inhibits GSK3B activity by promoting its phosphorylation at 'Ser-9'. The chain is N-cym protein (MYCNOS) from Homo sapiens (Human).